A 661-amino-acid polypeptide reads, in one-letter code: MIKTYDSNEYDVIVVGAGHAGCEAALASAHMGQKTLLVTIGLDMVAFMPCNPSVGGPAKGTVVREIDALGGQMGKNIDATYIQMRMLNTGKGPAVRALRAQADKWQYHEHMKDTIENTPNLTLRQAIVDQLVVEDGVCKGVITNTGAKYHAKSVVLTTGTAARGKIIIGELTYSSGPNNTTPSIKLSENLEKLGFKLRRFKTGTPPRVNGNTIDYSKTEEEPGDKTPRHFSYESKDVDYLKNQISCWMTYTNNGTHEIIRENLNRAPMFSGIIKGVGPRYCPSIEDKVVRFADKDRHQIFLEPEGRTTKEVYVGDFSTSMPEEIQLKMVHSVAGLEHAEMMRPGYAIEYDVVEPWQLKHTLETKNIKHLFTAGQMNGTSGYEEAAGQGLIAGINAALSAQDKPGFTLGRNDAYIGVLIDDLVTKGTNEPYRLLTSRAEYRLILRHDNADLRLTEYGHELGLISDERYEKFEEKKQAIRDAKERLHEITVHLSDDVQEFLKSIGQEPMKAGVKADVFLRRPNVKIADIERLTGEKIPGDRYVKEQVEIGIKYAGYIKKEETRIARLKRQEAKKIPADIDYEMIEGLATEARQKFEKIRPETLAQAERISGVNPADLAILSVYIQNGRYSKVKKYEAEDLKPSSYFAEKYGLEADAETGASQY.

FAD-binding positions include 16–21, Val128, and Ser183; that span reads GAGHAG. Residues 206–230 are disordered; the sequence is PRVNGNTIDYSKTEEEPGDKTPRHF. The span at 216–230 shows a compositional bias: basic and acidic residues; the sequence is SKTEEEPGDKTPRHF. 277 to 291 contacts NAD(+); that stretch reads GPRYCPSIEDKVVRF. Position 374 (Gln374) interacts with FAD.

This sequence belongs to the MnmG family. As to quaternary structure, homodimer. Heterotetramer of two MnmE and two MnmG subunits. The cofactor is FAD.

The protein resides in the cytoplasm. NAD-binding protein involved in the addition of a carboxymethylaminomethyl (cmnm) group at the wobble position (U34) of certain tRNAs, forming tRNA-cmnm(5)s(2)U34. This chain is tRNA uridine 5-carboxymethylaminomethyl modification enzyme MnmG, found in Lactobacillus helveticus (strain DPC 4571).